Consider the following 179-residue polypeptide: Adenine phosphoribosyltransferase (179 aa).

The protein belongs to the purine/pyrimidine phosphoribosyltransferase family. Homodimer.

The protein resides in the cytoplasm. It carries out the reaction AMP + diphosphate = 5-phospho-alpha-D-ribose 1-diphosphate + adenine. Its pathway is purine metabolism; AMP biosynthesis via salvage pathway; AMP from adenine: step 1/1. Catalyzes a salvage reaction resulting in the formation of AMP, that is energically less costly than de novo synthesis. This chain is Adenine phosphoribosyltransferase, found in Bradyrhizobium sp. (strain ORS 278).